The following is an 851-amino-acid chain: UPF0182 protein CYA_1810 (851 aa).

A run of 7 helical transmembrane segments spans residues 7–27 (GLVL…LASF), 47–67 (VLAR…VVGS), 76–96 (ASTA…AWSL), 141–161 (FNLV…ELGL), 168–188 (LALS…LFLL), 220–240 (LPAT…FWAL), and 259–279 (WASS…FGLL).

The protein belongs to the UPF0182 family.

Its subcellular location is the cell membrane. The sequence is that of UPF0182 protein CYA_1810 from Synechococcus sp. (strain JA-3-3Ab) (Cyanobacteria bacterium Yellowstone A-Prime).